Consider the following 422-residue polypeptide: Glutamyl-tRNA reductase (422 aa).

Residues 49–52 (TCNR), Ser107, 112–114 (EPQ), and Gln118 contribute to the substrate site. Catalysis depends on Cys50, which acts as the Nucleophile. 187-192 (GAGETI) serves as a coordination point for NADP(+).

This sequence belongs to the glutamyl-tRNA reductase family. In terms of assembly, homodimer.

The catalysed reaction is (S)-4-amino-5-oxopentanoate + tRNA(Glu) + NADP(+) = L-glutamyl-tRNA(Glu) + NADPH + H(+). It participates in porphyrin-containing compound metabolism; protoporphyrin-IX biosynthesis; 5-aminolevulinate from L-glutamyl-tRNA(Glu): step 1/2. Its function is as follows. Catalyzes the NADPH-dependent reduction of glutamyl-tRNA(Glu) to glutamate 1-semialdehyde (GSA). This chain is Glutamyl-tRNA reductase, found in Stutzerimonas stutzeri (strain A1501) (Pseudomonas stutzeri).